The primary structure comprises 149 residues: Small ribosomal subunit protein uS17c (149 aa).

A chloroplast-targeting transit peptide spans 1-49 (MITSSLTSSLQALKLSSPFAHGSTPLSSLSKPNSFPNHRMPALVPVIRA).

Belongs to the universal ribosomal protein uS17 family. Part of the 30S ribosomal subunit.

The protein localises to the plastid. The protein resides in the chloroplast. In terms of biological role, one of the primary rRNA binding proteins, it binds specifically to the 5'-end of 16S ribosomal RNA. Required for optimal plastid performance in terms of photosynthesis and growth. Required for the translation of plastid mRNAs. Plays a critical role in biosynthesis of thylakoid membrane proteins encoded by chloroplast genes. In Arabidopsis thaliana (Mouse-ear cress), this protein is Small ribosomal subunit protein uS17c (RPS17).